We begin with the raw amino-acid sequence, 346 residues long: Holliday junction branch migration complex subunit RuvB (346 aa).

Residues 1–183 (MTEQRIIASS…FGIVQRLEFY (183 aa)) form a large ATPase domain (RuvB-L) region. Residues Ile-22, Arg-23, Gly-64, Lys-67, Thr-68, Thr-69, 130-132 (EDF), Arg-173, Tyr-183, and Arg-220 each bind ATP. Thr-68 is a binding site for Mg(2+). Residues 184–254 (SPQELTRIVS…VAQAAMQMLK (71 aa)) form a small ATPAse domain (RuvB-S) region. The head domain (RuvB-H) stretch occupies residues 257-346 (PEGFDELDRR…PGIGEPGDLF (90 aa)). DNA-binding residues include Arg-293, Arg-312, and Arg-317.

The protein belongs to the RuvB family. Homohexamer. Forms an RuvA(8)-RuvB(12)-Holliday junction (HJ) complex. HJ DNA is sandwiched between 2 RuvA tetramers; dsDNA enters through RuvA and exits via RuvB. An RuvB hexamer assembles on each DNA strand where it exits the tetramer. Each RuvB hexamer is contacted by two RuvA subunits (via domain III) on 2 adjacent RuvB subunits; this complex drives branch migration. In the full resolvosome a probable DNA-RuvA(4)-RuvB(12)-RuvC(2) complex forms which resolves the HJ.

The protein localises to the cytoplasm. It catalyses the reaction ATP + H2O = ADP + phosphate + H(+). The RuvA-RuvB-RuvC complex processes Holliday junction (HJ) DNA during genetic recombination and DNA repair, while the RuvA-RuvB complex plays an important role in the rescue of blocked DNA replication forks via replication fork reversal (RFR). RuvA specifically binds to HJ cruciform DNA, conferring on it an open structure. The RuvB hexamer acts as an ATP-dependent pump, pulling dsDNA into and through the RuvAB complex. RuvB forms 2 homohexamers on either side of HJ DNA bound by 1 or 2 RuvA tetramers; 4 subunits per hexamer contact DNA at a time. Coordinated motions by a converter formed by DNA-disengaged RuvB subunits stimulates ATP hydrolysis and nucleotide exchange. Immobilization of the converter enables RuvB to convert the ATP-contained energy into a lever motion, pulling 2 nucleotides of DNA out of the RuvA tetramer per ATP hydrolyzed, thus driving DNA branch migration. The RuvB motors rotate together with the DNA substrate, which together with the progressing nucleotide cycle form the mechanistic basis for DNA recombination by continuous HJ branch migration. Branch migration allows RuvC to scan DNA until it finds its consensus sequence, where it cleaves and resolves cruciform DNA. This chain is Holliday junction branch migration complex subunit RuvB, found in Xanthomonas euvesicatoria pv. vesicatoria (strain 85-10) (Xanthomonas campestris pv. vesicatoria).